Consider the following 218-residue polypeptide: Uracil-DNA glycosylase (218 aa).

Aspartate 68 acts as the Proton acceptor in catalysis.

The protein belongs to the uracil-DNA glycosylase (UDG) superfamily. UNG family. Homodimer. Interacts with protein OPG148. Component of the Uracil-DNA glycosylase(UDG)-OPG148-polymerase complex; OPG148 and UDG form a heterodimeric processivity factor that associates with OPG71 to form the processive polymerase holoenzyme.

It carries out the reaction Hydrolyzes single-stranded DNA or mismatched double-stranded DNA and polynucleotides, releasing free uracil.. Its function is as follows. Plays an essential role in viral replication as a component of the DNA polymerase processivity factor. Excises uracil residues from the DNA which can arise as a result of misincorporation of dUMP residues by DNA polymerase or due to deamination of cytosine. This is Uracil-DNA glycosylase (OPG116) from Bos taurus (Bovine).